Here is a 557-residue protein sequence, read N- to C-terminus: NAC domain-containing protein 17 (557 aa).

In terms of domain architecture, NAC spans 16-166; it reads SAPGFRFHPT…YYALYKLFKK (151 aa). The DNA-binding element occupies 115-172; that stretch reads VGLKKTLVFYRGRAPSGERTDWVMHEYTMDEDELGRCKNPQEYYALYKLFKKSGAGPK. The chain crosses the membrane as a helical span at residues 526–546; sequence FLLLSIVGALCAIFWVLVATV.

As to expression, expressed in roots, rosette leaves, cauline leaves, shoot apex, stems and flowers.

Its subcellular location is the endoplasmic reticulum membrane. The protein localises to the nucleus. In terms of biological role, transcriptional activator activated by proteolytic cleavage through regulated intramembrane proteolysis (RIP). Transcriptional activator that acts as a positive regulator of AOX1A during mitochondrial dysfunction. Binds directly to AOX1A promoter. Mediates mitochondrial retrograde signaling. The polypeptide is NAC domain-containing protein 17 (Arabidopsis thaliana (Mouse-ear cress)).